The sequence spans 129 residues: Glycine cleavage system H protein (129 aa).

One can recognise a Lipoyl-binding domain in the interval 24–106; it reads SYTVGITEHA…YGDGWFFRIM (83 aa). At lysine 65 the chain carries N6-lipoyllysine.

This sequence belongs to the GcvH family. The glycine cleavage system is composed of four proteins: P, T, L and H. The cofactor is (R)-lipoate.

Functionally, the glycine cleavage system catalyzes the degradation of glycine. The H protein shuttles the methylamine group of glycine from the P protein to the T protein. In Shewanella denitrificans (strain OS217 / ATCC BAA-1090 / DSM 15013), this protein is Glycine cleavage system H protein.